Consider the following 148-residue polypeptide: MGTSSARPAVLALAGLALLLLLCLGPGDVSGNKLKKMLQKREGPVPSKTNVAVSEHTAKEFLGGLKRAKRQLWDRTRPEVQQWYQQFLYMGFDEAKFEDDVNYWLNRNQNGHDYYGDYYQRHYDEDAAIGPRSREGFRHGASVNYDDY.

An N-terminal signal peptide occupies residues 1-31 (MGTSSARPAVLALAGLALLLLLCLGPGDVSG). Propeptides lie at residues 32 to 68 (NKLK…LKRA) and 133 to 148 (SREG…YDDY).

The protein belongs to the augurin family. In terms of tissue distribution, expressed in the brain, with expression in the choroid plexus and the ventricular ependymal cells (at protein level).

It localises to the secreted. Its subcellular location is the cytoplasm. The protein resides in the apical cell membrane. Probable hormone that may attenuate cell proliferation and induce senescence of oligodendrocyte and neural precursor cells in the central nervous system. ECRG4-induced senescence is characterized by G1 arrest, RB1 dephosphorylation and accelerated CCND1 and CCND3 proteasomal degradation. This is Augurin from Rattus norvegicus (Rat).